The chain runs to 153 residues: MSIEINNESAVEVDEPLIQRLATYALDTLHVHPDAELAIVMVDEGAMEQLHVQWMDEPGPTDVLSFPMDELRPGTEDRPTPAGLLGDIVVCPQVAAEQAVTAGHSTMEEILLLTAHGILHLLGFDHAEPDEEREMFGLQRDILIGFAMSERGR.

Residues His-116, His-120, and His-126 each coordinate Zn(2+).

Belongs to the endoribonuclease YbeY family. Requires Zn(2+) as cofactor.

The protein resides in the cytoplasm. In terms of biological role, single strand-specific metallo-endoribonuclease involved in late-stage 70S ribosome quality control and in maturation of the 3' terminus of the 16S rRNA. This is Endoribonuclease YbeY from Clavibacter sepedonicus (Clavibacter michiganensis subsp. sepedonicus).